The sequence spans 344 residues: tRNA N6-adenosine threonylcarbamoyltransferase (344 aa).

Fe cation contacts are provided by histidine 119 and histidine 123. Substrate is bound by residues 141–145, aspartate 174, glycine 187, aspartate 191, and asparagine 280; that span reads VVSGG. Residue aspartate 310 participates in Fe cation binding.

Belongs to the KAE1 / TsaD family. Fe(2+) serves as cofactor.

Its subcellular location is the cytoplasm. It carries out the reaction L-threonylcarbamoyladenylate + adenosine(37) in tRNA = N(6)-L-threonylcarbamoyladenosine(37) in tRNA + AMP + H(+). Required for the formation of a threonylcarbamoyl group on adenosine at position 37 (t(6)A37) in tRNAs that read codons beginning with adenine. Is involved in the transfer of the threonylcarbamoyl moiety of threonylcarbamoyl-AMP (TC-AMP) to the N6 group of A37, together with TsaE and TsaB. TsaD likely plays a direct catalytic role in this reaction. The chain is tRNA N6-adenosine threonylcarbamoyltransferase from Listeria welshimeri serovar 6b (strain ATCC 35897 / DSM 20650 / CCUG 15529 / CIP 8149 / NCTC 11857 / SLCC 5334 / V8).